Consider the following 445-residue polypeptide: Glucose-6-phosphate isomerase (445 aa).

Catalysis depends on E287, which acts as the Proton donor. Residues H308 and K422 contribute to the active site.

The protein belongs to the GPI family.

It is found in the cytoplasm. It carries out the reaction alpha-D-glucose 6-phosphate = beta-D-fructose 6-phosphate. The protein operates within carbohydrate biosynthesis; gluconeogenesis. It participates in carbohydrate degradation; glycolysis; D-glyceraldehyde 3-phosphate and glycerone phosphate from D-glucose: step 2/4. Functionally, catalyzes the reversible isomerization of glucose-6-phosphate to fructose-6-phosphate. In Bacteroides thetaiotaomicron (strain ATCC 29148 / DSM 2079 / JCM 5827 / CCUG 10774 / NCTC 10582 / VPI-5482 / E50), this protein is Glucose-6-phosphate isomerase.